Here is a 250-residue protein sequence, read N- to C-terminus: Phosphoribosylaminoimidazole-succinocarboxamide synthase (250 aa).

This sequence belongs to the SAICAR synthetase family.

It carries out the reaction 5-amino-1-(5-phospho-D-ribosyl)imidazole-4-carboxylate + L-aspartate + ATP = (2S)-2-[5-amino-1-(5-phospho-beta-D-ribosyl)imidazole-4-carboxamido]succinate + ADP + phosphate + 2 H(+). It participates in purine metabolism; IMP biosynthesis via de novo pathway; 5-amino-1-(5-phospho-D-ribosyl)imidazole-4-carboxamide from 5-amino-1-(5-phospho-D-ribosyl)imidazole-4-carboxylate: step 1/2. The chain is Phosphoribosylaminoimidazole-succinocarboxamide synthase from Bifidobacterium longum subsp. infantis (strain ATCC 15697 / DSM 20088 / JCM 1222 / NCTC 11817 / S12).